The following is a 348-amino-acid chain: Putative S-adenosyl-L-methionine-dependent methyltransferase MRA_3439 (348 aa).

Residues D171 and 200–201 (DL) contribute to the S-adenosyl-L-methionine site.

This sequence belongs to the UPF0677 family.

Its function is as follows. Exhibits S-adenosyl-L-methionine-dependent methyltransferase activity. This is Putative S-adenosyl-L-methionine-dependent methyltransferase MRA_3439 from Mycobacterium tuberculosis (strain ATCC 25177 / H37Ra).